Reading from the N-terminus, the 63-residue chain is Overexpressed in colon carcinoma 1 protein homolog (63 aa).

The segment covering 1 to 10 (MGCGNSTATS) has biased composition (polar residues). Positions 1-37 (MGCGNSTATSAAAGRGKPGAVKDATEDSITEDDKRRN) are disordered.

Belongs to the OCC1 family.

The polypeptide is Overexpressed in colon carcinoma 1 protein homolog (Rattus norvegicus (Rat)).